The following is an 83-amino-acid chain: Kunitz-type serine protease inhibitor superbin-3 (83 aa).

Residues 1-24 (MSSGGLLLLLGLLTLWEVLTPVSS) form the signal peptide. In terms of domain architecture, BPTI/Kunitz inhibitor spans 31-81 (CELPADSGSCKGNFQAFYYNPVQHQCLEFIYGGCDGNANNFKTIDECKRTC). Cystine bridges form between cysteine 31-cysteine 81, cysteine 40-cysteine 64, and cysteine 56-cysteine 77.

Belongs to the venom Kunitz-type family. In terms of tissue distribution, expressed by the venom gland.

The protein localises to the secreted. Serine protease inhibitor. This chain is Kunitz-type serine protease inhibitor superbin-3, found in Austrelaps superbus (Lowland copperhead snake).